A 294-amino-acid polypeptide reads, in one-letter code: Probable metallo-hydrolase BURPS1710b_2304 (294 aa).

H68, H70, D72, H73, H143, D170, and H212 together coordinate a divalent metal cation.

This sequence belongs to the metallo-beta-lactamase superfamily. A divalent metal cation is required as a cofactor.

In terms of biological role, probable hydrolase. Does not have beta-lactamase activity. This is Probable metallo-hydrolase BURPS1710b_2304 from Burkholderia pseudomallei (strain 1710b).